The chain runs to 132 residues: Small ribosomal subunit protein uS9 (132 aa).

The protein belongs to the universal ribosomal protein uS9 family.

The chain is Small ribosomal subunit protein uS9 (rps9) from Halobacterium salinarum (strain ATCC 700922 / JCM 11081 / NRC-1) (Halobacterium halobium).